A 437-amino-acid chain; its full sequence is UDP-N-acetylmuramoylalanine--D-glutamate ligase (437 aa).

112-118 lines the ATP pocket; that stretch reads GSNGKST.

It belongs to the MurCDEF family.

The protein localises to the cytoplasm. The enzyme catalyses UDP-N-acetyl-alpha-D-muramoyl-L-alanine + D-glutamate + ATP = UDP-N-acetyl-alpha-D-muramoyl-L-alanyl-D-glutamate + ADP + phosphate + H(+). It participates in cell wall biogenesis; peptidoglycan biosynthesis. In terms of biological role, cell wall formation. Catalyzes the addition of glutamate to the nucleotide precursor UDP-N-acetylmuramoyl-L-alanine (UMA). This chain is UDP-N-acetylmuramoylalanine--D-glutamate ligase, found in Haemophilus influenzae (strain PittGG).